Reading from the N-terminus, the 236-residue chain is Small ribosomal subunit protein uS2c (236 aa).

The protein belongs to the universal ribosomal protein uS2 family.

The protein localises to the plastid. It is found in the chloroplast. This is Small ribosomal subunit protein uS2c (rps2) from Physcomitrium patens (Spreading-leaved earth moss).